Consider the following 79-residue polypeptide: Putative membrane protein insertion efficiency factor (79 aa).

It belongs to the UPF0161 family.

The protein resides in the cell inner membrane. In terms of biological role, could be involved in insertion of integral membrane proteins into the membrane. This is Putative membrane protein insertion efficiency factor from Cytophaga hutchinsonii (strain ATCC 33406 / DSM 1761 / CIP 103989 / NBRC 15051 / NCIMB 9469 / D465).